Consider the following 589-residue polypeptide: ATP-dependent lipid A-core flippase (589 aa).

Transmembrane regions (helical) follow at residues 29 to 49, 70 to 90, 157 to 177, 261 to 281, and 283 to 303; these read LLLV…TGFL, WLPV…YITD, VIGA…TILV, MIGA…ALAG, and LTAG…PGLK. The ABC transmembrane type-1 domain occupies 32–314; sequence VAALIAALIE…LTNVQNMVQR (283 aa). Residues 346-582 form the ABC transporter domain; sequence IEFRDVTARY…GGLYSHLHGM (237 aa). 380 to 387 lines the ATP pocket; sequence GRSGSGKS.

This sequence belongs to the ABC transporter superfamily. Lipid exporter (TC 3.A.1.106) family. As to quaternary structure, homodimer.

The protein localises to the cell inner membrane. The catalysed reaction is ATP + H2O + lipid A-core oligosaccharideSide 1 = ADP + phosphate + lipid A-core oligosaccharideSide 2.. Functionally, involved in lipopolysaccharide (LPS) biosynthesis. Translocates lipid A-core from the inner to the outer leaflet of the inner membrane. Transmembrane domains (TMD) form a pore in the inner membrane and the ATP-binding domain (NBD) is responsible for energy generation. The protein is ATP-dependent lipid A-core flippase of Xanthomonas euvesicatoria pv. vesicatoria (strain 85-10) (Xanthomonas campestris pv. vesicatoria).